A 904-amino-acid chain; its full sequence is MICAL-like protein 2 (904 aa).

The Calponin-homology (CH) domain maps to 1-107; sequence MAAIRALQQW…YVSQYYNYFH (107 aa). The forms an intramolecular interaction with the C-terminal coiled coil domain keeping the protein in a closed conformation stretch occupies residues 1–260; that stretch reads MAAIRALQQW…KLTGLVPRQP (260 aa). Phosphoserine occurs at positions 110, 143, and 153. Positions 117–178 are disordered; it reads GVKRASEDSE…GGPPPKTDQA (62 aa). Over residues 143 to 153 the composition is skewed to pro residues; sequence SPAPARKPPLS. Positions 186 to 248 constitute an LIM zinc-binding domain; sequence STCGVCGKHV…TSHLPAAASA (63 aa). At serine 249 the chain carries Phosphoserine. A disordered region spans residues 251–722; sequence KLTGLVPRQP…PANVPALPGE (472 aa). The segment at 261–388 is necessary and sufficient for interaction with actinins; the sequence is GAMGVDSRTS…GGAPRVAAPQ (128 aa). The mediates targeting to the cell plasma membrane stretch occupies residues 261-697; the sequence is GAMGVDSRTS…EARVQSWKEE (437 aa). The span at 267–277 shows a compositional bias: polar residues; the sequence is SRTSCSPQKAQ. Low complexity-rich tracts occupy residues 293 to 314 and 349 to 362; these read NSPARASVPAAPNPAATSATSV and SSAAPCTAAAASHP. Serine 294 is subject to Phosphoserine. Positions 363–374 are enriched in pro residues; it reads AVPPSAPDPRPA. A compositionally biased stretch (low complexity) spans 385-400; sequence AAPQTTLSSSSTSAAT. Polar residues predominate over residues 408–433; it reads PSASRTQQARNKFFQTSAVPPGTSLS. The span at 459–480 shows a compositional bias: low complexity; it reads ALSALEEAGAPAPGRPSPATAA. A phosphoserine mark is found at serine 494 and serine 504. Low complexity-rich tracts occupy residues 520–534 and 542–553; these read LSTSSTSQASALPPA and SSGVGRVGAGSR. The span at 564–578 shows a compositional bias: polar residues; the sequence is KSTTLTQDMSTSLQE. Positions 593-622 are enriched in basic and acidic residues; sequence PVDRRSPAERTLKPKEPRALAEPRAGEAPR. Phosphoserine is present on serine 598. A Phosphothreonine modification is found at threonine 644. Over residues 647-661 the composition is skewed to pro residues; it reads PASPGPSLPARSPSP. Residues serine 649, serine 658, serine 660, and serine 726 each carry the phosphoserine modification. Residues 698–807 form a forms an intramolecular interaction with the N-terminal Calponin-homology and LIM zinc-binding domains-containing region keeping the protein in a closed conformation region; the sequence is EKKPHLQGKP…LMYKSKAQRL (110 aa). Residues 723-874 enclose the bMERB domain; the sequence is TVTSPVRLHP…EQEEDQMLRD (152 aa). Positions 735–771 form a coiled coil; the sequence is LSPEEIQRQLQDIERRLDALELRGVELEKRLRAAEGD. Residues 807-903 form a mediates interaction with RAB13 and is required for transition from the closed to the opened conformation region; it reads LEEQQLDIEG…WSPKSKSSPS (97 aa).

Interacts with RAB13 (GTP-bound form); competes with RAB8A and is involved in tight junctions assembly. Interacts with RAB8A; competes with RAB13 and is involved in E-cadherin endocytic recycling. Interacts with RAB8B. Interacts (preferentially in opened conformation) with ACTN1 and ACTN4; stimulated by RAB13 activation. Interacts (via calponin-homology (CH) domain) with the filamins FLNA, FLNB and FLNC (via actin-binding domain).

Its subcellular location is the cell membrane. It localises to the cell junction. It is found in the tight junction. The protein localises to the recycling endosome. The protein resides in the cell projection. Its subcellular location is the cytoplasm. It localises to the cytoskeleton. Its function is as follows. Effector of small Rab GTPases which is involved in junctional complexes assembly through the regulation of cell adhesion molecules transport to the plasma membrane and actin cytoskeleton reorganization. Regulates the endocytic recycling of occludins, claudins and E-cadherin to the plasma membrane and may thereby regulate the establishment of tight junctions and adherens junctions. In parallel, may regulate actin cytoskeleton reorganization directly through interaction with F-actin or indirectly through actinins and filamins. Most probably involved in the processes of epithelial cell differentiation, cell spreading and neurite outgrowth. Undergoes liquid-liquid phase separation to form tubular recycling endosomes. Plays 2 sequential roles in the biogenesis of tubular recycling endosomes: first organizes phase separation and then the closed form formed by interaction with RAB8A promotes endosomal tubulation. This is MICAL-like protein 2 from Homo sapiens (Human).